We begin with the raw amino-acid sequence, 89 residues long: Small ribosomal subunit protein uS15 (89 aa).

It belongs to the universal ribosomal protein uS15 family. Part of the 30S ribosomal subunit. Forms a bridge to the 50S subunit in the 70S ribosome, contacting the 23S rRNA.

In terms of biological role, one of the primary rRNA binding proteins, it binds directly to 16S rRNA where it helps nucleate assembly of the platform of the 30S subunit by binding and bridging several RNA helices of the 16S rRNA. Its function is as follows. Forms an intersubunit bridge (bridge B4) with the 23S rRNA of the 50S subunit in the ribosome. The polypeptide is Small ribosomal subunit protein uS15 (Psychromonas ingrahamii (strain DSM 17664 / CCUG 51855 / 37)).